The sequence spans 66 residues: MQRGKVKWFNNEKGYGFIEVEGGSDVFVHFTAIQGEGFKTLEEGQEVSFEIVQGNRGPQAANVVKL.

A CSD domain is found at 4–63 (GKVKWFNNEKGYGFIEVEGGSDVFVHFTAIQGEGFKTLEEGQEVSFEIVQGNRGPQAANV).

Homodimer.

It localises to the cytoplasm. Its function is as follows. Affects cell viability at low temperatures. The polypeptide is Cold shock protein CspB (cspB) (Bacillus caldolyticus).